The primary structure comprises 489 residues: Betaine aldehyde dehydrogenase (489 aa).

Thr-26 and Asp-93 together coordinate K(+). Gly-150–Trp-152 provides a ligand contact to NAD(+). Lys-162 (charge relay system) is an active-site residue. Lys-176–Glu-179 is an NAD(+) binding site. Residue Ile-180 coordinates K(+). Gly-229–Thr-232 is an NAD(+) binding site. Leu-245 is a binding site for K(+). Glu-251 acts as the Proton acceptor in catalysis. Positions 253, 285, and 386 each coordinate NAD(+). Residue Cys-285 is the Nucleophile of the active site. At Cys-285 the chain carries Cysteine sulfenic acid (-SOH). K(+) is bound by residues Lys-456 and Gly-459. Glu-463 acts as the Charge relay system in catalysis.

This sequence belongs to the aldehyde dehydrogenase family. As to quaternary structure, dimer of dimers. K(+) serves as cofactor.

The enzyme catalyses betaine aldehyde + NAD(+) + H2O = glycine betaine + NADH + 2 H(+). The protein operates within amine and polyamine biosynthesis; betaine biosynthesis via choline pathway; betaine from betaine aldehyde: step 1/1. Its function is as follows. Involved in the biosynthesis of the osmoprotectant glycine betaine. Catalyzes the irreversible oxidation of betaine aldehyde to the corresponding acid. This is Betaine aldehyde dehydrogenase from Paraburkholderia xenovorans (strain LB400).